We begin with the raw amino-acid sequence, 137 residues long: Putative nucleoside diphosphate kinase (137 aa).

Phe-45, Arg-73, Thr-79, Arg-90, and Asn-100 together coordinate ATP. The Pros-phosphohistidine intermediate role is filled by His-103.

It belongs to the NDK family. The cofactor is Mg(2+).

The catalysed reaction is a 2'-deoxyribonucleoside 5'-diphosphate + ATP = a 2'-deoxyribonucleoside 5'-triphosphate + ADP. It carries out the reaction a ribonucleoside 5'-diphosphate + ATP = a ribonucleoside 5'-triphosphate + ADP. Functionally, major role in the synthesis of nucleoside triphosphates other than ATP. The ATP gamma phosphate is transferred to the NDP beta phosphate via a ping-pong mechanism, using a phosphorylated active-site intermediate. This Homo sapiens (Human) protein is Putative nucleoside diphosphate kinase (NME2P1).